Here is a 362-residue protein sequence, read N- to C-terminus: Cytochrome P450 monooxygenase-like protein avaN (362 aa).

A helical transmembrane segment spans residues 3–23; the sequence is VILAIFIAAAGCLFSSWRIYW.

Belongs to the cytochrome P450 family.

Its subcellular location is the membrane. The protein operates within secondary metabolite biosynthesis. Functionally, cytochrome P450 monooxygenase-like protein; part of the cluster that mediates the biosynthesis of a highly modified cyclo-arginine-tryptophan dipeptide (cRW). The first step of the pathway is perfornmed by the arginine-containing cyclodipeptide synthase (RCPDS) avaA that acts as the scaffold-generating enzyme and is responsible for formation of the cyclo-Arg-Trp (cRW) diketopiperazine. AvaB then acts as a multifunctional flavoenzyme that is responsible for generating the cyclo-Arg-formylkynurenine DKP, which can be deformylated by avaC. AvaB then further catalyzes an additional N-oxidation followed by cyclization and dehydration. The next step is an N-acetylation of the guanidine group catalyzed by the arginine N-acetyltransferase avaD. The roles of the additional enzymes identified within the ava cluster still have to be determined. This is Cytochrome P450 monooxygenase-like protein avaN from Aspergillus versicolor.